A 922-amino-acid polypeptide reads, in one-letter code: Autophagy-related protein 9B (922 aa).

Disordered stretches follow at residues 1–22 (MVRRTGWGGSRRQRGRWGDLGP) and 85–144 (TPHN…MGPL). At 1-206 (MVRRTGWGGS…KIYSYHQRNG (206 aa)) the chain is on the cytoplasmic side. Residues 85 to 114 (TPHNVLPTPTTPSTQAHPTMIHTSASPSWG) show a composition bias toward polar residues. Low complexity predominate over residues 115-124 (SHSTPPLASA). Residues 150–153 (YERL) carry the Tyrosine-based sorting signal motif. Residues 207–227 (FACILLEDVFQLGQFIFIVTF) form a helical membrane-spanning segment. Residues 228–275 (TTFLLRCVDYNVLFNNQPKNHTRRGPLHSKVTLSDAILPSAQCAEKIH) lie on the Lumenal side of the membrane. Residues 276–296 (DSPLLVFLLVLAAGFWLFQLL) form a helical membrane-spanning segment. At 297-437 (RSVCNLFSYW…GVLANRWRRT (141 aa)) the chain is on the cytoplasmic side. Residues 438–458 (VLLLAAVNLALSPLVLAWQVL) lie within the membrane without spanning it. The Cytoplasmic segment spans residues 459-523 (HAFYSHVELL…RAAEPPAPLR (65 aa)). A helical transmembrane segment spans residues 524–544 (ALLARQLVFFSGALFAALLVL). The Lumenal portion of the chain corresponds to 545–550 (TIYDED). Residues 551–571 (VLAVEHVLTTMTALGVTATVA) form a helical membrane-spanning segment. At 572–624 (RSFIPEEQCQGRSSQLLLQAALAHMHYLPEEPGATGARASSYWQMAQLLQYRA) the chain is on the cytoplasmic side. An intramembrane segment occupies 625 to 645 (VSLLEELLSPLLTPLFLLFWF). The Cytoplasmic segment spans residues 646 to 922 (RPRALEIIDF…QKEPLTGPLH (277 aa)). Positions 848-922 (ELWGEASASS…QKEPLTGPLH (75 aa)) are disordered. 2 stretches are compositionally biased toward low complexity: residues 854–870 (SASSPSRPWSSPSQPGS) and 877–889 (SWSSDGSSPASSP). The span at 890-899 (RQQWGTQRAQ) shows a compositional bias: polar residues.

It belongs to the ATG9 family. In terms of assembly, homotrimer; forms a homotrimer with a central pore that forms a path between the two membrane leaflets. As to expression, expressed in heart, brain, and placenta and testis.

It is found in the preautophagosomal structure membrane. The catalysed reaction is a 1,2-diacyl-sn-glycero-3-phosphocholine(in) = a 1,2-diacyl-sn-glycero-3-phosphocholine(out). It catalyses the reaction a 1,2-diacyl-sn-glycero-3-phospho-L-serine(in) = a 1,2-diacyl-sn-glycero-3-phospho-L-serine(out). The enzyme catalyses a 1,2-diacyl-sn-glycero-3-phosphoethanolamine(in) = a 1,2-diacyl-sn-glycero-3-phosphoethanolamine(out). Phospholipid scramblase involved in autophagy by mediating autophagosomal membrane expansion. Cycles between the preautophagosomal structure/phagophore assembly site (PAS) and the cytoplasmic vesicle pool and supplies membrane for the growing autophagosome. Lipid scramblase activity plays a key role in preautophagosomal structure/phagophore assembly by distributing the phospholipids that arrive through ATG2 (ATG2A or ATG2B) from the cytoplasmic to the luminal leaflet of the bilayer, thereby driving autophagosomal membrane expansion. In addition to autophagy, also plays a role in necrotic cell death. In Mus musculus (Mouse), this protein is Autophagy-related protein 9B.